A 115-amino-acid polypeptide reads, in one-letter code: Large ribosomal subunit protein bL20c (115 aa).

Belongs to the bacterial ribosomal protein bL20 family.

The protein resides in the plastid. The protein localises to the chloroplast. In terms of biological role, binds directly to 23S ribosomal RNA and is necessary for the in vitro assembly process of the 50S ribosomal subunit. It is not involved in the protein synthesizing functions of that subunit. This Pyropia yezoensis (Susabi-nori) protein is Large ribosomal subunit protein bL20c.